A 253-amino-acid polypeptide reads, in one-letter code: MLNKRVIPCLDVNNGRVVKGTSFVNLRDAGDPVELAARYYREGADELVFLDISATTEERKTMAEVVEKVSKEVFIPLCVGGGLRSIADMTTLLRAGADKVSVNSAAVSDPDLISRGAEKFGRQCIVVAIDAKREGNSWQVYTHSGKKPTGLDAVEWAMKAEQLGAGEILLTSIDADGKNTGYDNELNREVSSRLNIPVIASGGAGSPEDLYNALDKGQADAVLAASIFHYGRYSIAEVKKYLKSKGLPVRLEN.

Catalysis depends on residues D11 and D130.

This sequence belongs to the HisA/HisF family. In terms of assembly, heterodimer of HisH and HisF.

It localises to the cytoplasm. The catalysed reaction is 5-[(5-phospho-1-deoxy-D-ribulos-1-ylimino)methylamino]-1-(5-phospho-beta-D-ribosyl)imidazole-4-carboxamide + L-glutamine = D-erythro-1-(imidazol-4-yl)glycerol 3-phosphate + 5-amino-1-(5-phospho-beta-D-ribosyl)imidazole-4-carboxamide + L-glutamate + H(+). The protein operates within amino-acid biosynthesis; L-histidine biosynthesis; L-histidine from 5-phospho-alpha-D-ribose 1-diphosphate: step 5/9. In terms of biological role, IGPS catalyzes the conversion of PRFAR and glutamine to IGP, AICAR and glutamate. The HisF subunit catalyzes the cyclization activity that produces IGP and AICAR from PRFAR using the ammonia provided by the HisH subunit. The chain is Imidazole glycerol phosphate synthase subunit HisF from Dehalococcoides mccartyi (strain ATCC BAA-2100 / JCM 16839 / KCTC 5957 / BAV1).